The following is a 512-amino-acid chain: NAD(P)H-quinone oxidoreductase chain 4, chloroplastic (512 aa).

The next 14 helical transmembrane spans lie at 4–24 (VPWL…IPLL), 34–54 (WYAL…FGCY), 87–107 (IGLI…AWPV), 111–131 (PKLF…LFAS), 134–154 (ILLF…LLSM), 167–187 (FILY…TASL), 208–228 (GLEI…LPAF), 242–262 (HYST…YGFI), 274–294 (TVFA…AALV), 308–328 (SSVS…DLGL), 330–350 (GAML…FLAG), 374–396 (MFAM…GFVS), 417–437 (IITL…LSMV), and 462–482 (VFVL…PNFA).

This sequence belongs to the complex I subunit 4 family.

It is found in the plastid. The protein resides in the chloroplast thylakoid membrane. It carries out the reaction a plastoquinone + NADH + (n+1) H(+)(in) = a plastoquinol + NAD(+) + n H(+)(out). The catalysed reaction is a plastoquinone + NADPH + (n+1) H(+)(in) = a plastoquinol + NADP(+) + n H(+)(out). This is NAD(P)H-quinone oxidoreductase chain 4, chloroplastic from Zygnema circumcarinatum (Green alga).